The following is a 497-amino-acid chain: Meiosis-specific serine/threonine-protein kinase MEK1 (497 aa).

Positions 47 to 102 (VKVGRNDKECQLVLTNPSISSVHCVFWCVFFDEDSIPMFYVKDCSLNGTYLNGLLL) constitute an FHA domain. The Protein kinase domain maps to 162-444 (EITNRIVGNG…SKQGLKHIWI (283 aa)). Residues 168–176 (VGNGTFGHV) and Lys-199 contribute to the ATP site. Catalysis depends on Asp-290, which acts as the Proton acceptor.

The protein belongs to the protein kinase superfamily. CAMK Ser/Thr protein kinase family. CHEK2 subfamily.

It carries out the reaction L-seryl-[protein] + ATP = O-phospho-L-seryl-[protein] + ADP + H(+). The catalysed reaction is L-threonyl-[protein] + ATP = O-phospho-L-threonyl-[protein] + ADP + H(+). Probable protein kinase required for meiotic recombination. The chain is Meiosis-specific serine/threonine-protein kinase MEK1 (MEK1) from Saccharomyces cerevisiae (strain ATCC 204508 / S288c) (Baker's yeast).